We begin with the raw amino-acid sequence, 377 residues long: Lipoyl synthase, mitochondrial (377 aa).

[4Fe-4S] cluster is bound by residues Cys103, Cys108, Cys114, Cys134, Cys138, Cys141, and Ser349. Positions 119–338 (EHGTQTATIM…EERGNELGFL (220 aa)) constitute a Radical SAM core domain.

Belongs to the radical SAM superfamily. Lipoyl synthase family. It depends on [4Fe-4S] cluster as a cofactor.

It is found in the mitochondrion. It carries out the reaction [[Fe-S] cluster scaffold protein carrying a second [4Fe-4S](2+) cluster] + N(6)-octanoyl-L-lysyl-[protein] + 2 oxidized [2Fe-2S]-[ferredoxin] + 2 S-adenosyl-L-methionine + 4 H(+) = [[Fe-S] cluster scaffold protein] + N(6)-[(R)-dihydrolipoyl]-L-lysyl-[protein] + 4 Fe(3+) + 2 hydrogen sulfide + 2 5'-deoxyadenosine + 2 L-methionine + 2 reduced [2Fe-2S]-[ferredoxin]. The protein operates within protein modification; protein lipoylation via endogenous pathway; protein N(6)-(lipoyl)lysine from octanoyl-[acyl-carrier-protein]: step 2/2. In terms of biological role, catalyzes the radical-mediated insertion of two sulfur atoms into the C-6 and C-8 positions of the octanoyl moiety bound to the lipoyl domains of lipoate-dependent enzymes, thereby converting the octanoylated domains into lipoylated derivatives. In Drosophila sechellia (Fruit fly), this protein is Lipoyl synthase, mitochondrial.